The primary structure comprises 109 residues: Cortistatin (109 aa).

The first 25 residues, 1 to 25 (MMGGRGTGGKWPSAFGLLLLWGVAA), serve as a signal peptide directing secretion. Positions 26-93 (SALPLESGPT…PPPQQPPHLD (68 aa)) are excised as a propeptide. The disordered stretch occupies residues 64–97 (ASSSTPVGGGTPGLSKSQERPPPQQPPHLDKKPC). The cysteines at positions 97 and 108 are disulfide-linked.

Belongs to the somatostatin family. In terms of tissue distribution, expressed in a subset of GABAergic cells in the cortex and hippocampus.

It is found in the secreted. The protein is Cortistatin (Cort) of Mus musculus (Mouse).